A 307-amino-acid chain; its full sequence is Putative S-adenosyl-L-methionine-dependent methyltransferase Mflv_5023 (307 aa).

Residues Asp-133 and 162–163 each bind S-adenosyl-L-methionine; that span reads DL. Residues 213–234 are disordered; sequence SRLAVESVPSQQSADQDEMREK.

This sequence belongs to the UPF0677 family.

In terms of biological role, exhibits S-adenosyl-L-methionine-dependent methyltransferase activity. The sequence is that of Putative S-adenosyl-L-methionine-dependent methyltransferase Mflv_5023 from Mycolicibacterium gilvum (strain PYR-GCK) (Mycobacterium gilvum (strain PYR-GCK)).